We begin with the raw amino-acid sequence, 440 residues long: Chromosomal replication initiator protein DnaA (440 aa).

The domain I, interacts with DnaA modulators stretch occupies residues 1–75; that stretch reads MNPNQILENL…QSGNKASVLI (75 aa). Residues 75–99 form a domain II region; it reads IQAQSAKQSSKSTKIDIAHIKAQST. Residues 100–316 are domain III, AAA+ region; that stretch reads ILNPSFTFES…GIIISLNAYA (217 aa). Residues G146, G148, K149, and T150 each contribute to the ATP site. The segment at 317 to 440 is domain IV, binds dsDNA; the sequence is TILGQEITLE…KNKILVKSQS (124 aa).

It belongs to the DnaA family. Oligomerizes as a right-handed, spiral filament on DNA at oriC.

Its subcellular location is the cytoplasm. Its function is as follows. Plays an essential role in the initiation and regulation of chromosomal replication. ATP-DnaA binds to the origin of replication (oriC) to initiate formation of the DNA replication initiation complex once per cell cycle. Binds the DnaA box (a 9 base pair repeat at the origin) and separates the double-stranded (ds)DNA. Forms a right-handed helical filament on oriC DNA; dsDNA binds to the exterior of the filament while single-stranded (ss)DNA is stabiized in the filament's interior. The ATP-DnaA-oriC complex binds and stabilizes one strand of the AT-rich DNA unwinding element (DUE), permitting loading of DNA polymerase. After initiation quickly degrades to an ADP-DnaA complex that is not apt for DNA replication. Binds acidic phospholipids. The protein is Chromosomal replication initiator protein DnaA of Campylobacter jejuni subsp. jejuni serotype O:6 (strain 81116 / NCTC 11828).